Consider the following 491-residue polypeptide: Carbohydrate ABC transporter substrate-binding protein (491 aa).

The Zn(2+) site is built by Asp-212, His-247, His-252, and Glu-256.

It belongs to the bacterial solute-binding protein 1 family. Exists as a monomer, homodimer, homotrimer and homotetramer; oligomerization increases with higher protein concentration.

It localises to the cell surface. Probably part of an ABC transporter complex involved in carbohydrate transport. In Streptococcus pneumoniae serotype 4 (strain ATCC BAA-334 / TIGR4), this protein is Carbohydrate ABC transporter substrate-binding protein.